A 146-amino-acid chain; its full sequence is Cytochrome b5 type B (146 aa).

The propeptide occupies 1 to 11 (MATPEASGSGE). Serine 19 carries the post-translational modification Phosphoserine. One can recognise a Cytochrome b5 heme-binding domain in the interval 20–96 (VTYYRLEEVA…LKQYYIGDVH (77 aa)). An N6-acetyllysine modification is found at lysine 30. Serine 33 is subject to Phosphoserine. The heme site is built by histidine 55 and histidine 79. The residue at position 80 (serine 80) is a Phosphoserine. A helical transmembrane segment spans residues 119–136 (WAYWFVPIVGAILIGFLY).

Belongs to the cytochrome b5 family. In terms of assembly, component of a complex composed of cytochrome b5, NADH-cytochrome b5 reductase (CYB5R3) and MTARC2.

The protein localises to the mitochondrion outer membrane. Cytochrome b5 is a membrane-bound hemoprotein functioning as an electron carrier for several membrane-bound oxygenases. In Mus musculus (Mouse), this protein is Cytochrome b5 type B (Cyb5b).